The chain runs to 136 residues: Histone H3.1/H3.2 (136 aa).

Residues 1-43 (MARTKQTARKSTGGKAPRKQLASKAARKSAPSTGGVKKPHRYK) are disordered. Lys-5 carries the N6,N6,N6-trimethyllysine; alternate modification. An N6,N6-dimethyllysine; alternate modification is found at Lys-5. N6-methyllysine; alternate occurs at positions 5 and 10. Position 10 is an N6-acetyllysine; alternate (Lys-10). Ser-11 is subject to Phosphoserine. At Lys-15 the chain carries N6,N6-dimethyllysine; alternate. N6-acetyllysine; alternate is present on residues Lys-15, Lys-19, Lys-24, Lys-28, and Lys-37. N6-methyllysine; alternate occurs at positions 19, 24, 28, and 37. 2 positions are modified to N6,N6,N6-trimethyllysine; alternate: Lys-28 and Lys-37. Lys-28 and Lys-37 each carry N6,N6-dimethyllysine; alternate. N6-acetyllysine is present on residues Lys-57 and Lys-65. An N6,N6,N6-trimethyllysine; alternate modification is found at Lys-80. Lys-80 is modified (N6,N6-dimethyllysine; alternate). The residue at position 80 (Lys-80) is an N6-methyllysine; alternate.

The protein belongs to the histone H3 family. The nucleosome is a histone octamer containing two molecules each of H2A, H2B, H3 and H4 assembled in one H3-H4 heterotetramer and two H2A-H2B heterodimers. The octamer wraps approximately 147 bp of DNA. In terms of processing, phosphorylated to form H3S10ph. H3S10ph promotes subsequent H3K14ac formation and is required for transcriptional activation through TBP recruitment to the promoters. Post-translationally, mono-, di- and trimethylated by the COMPASS complex to form H3K4me1/2/3. H3K4me activates gene expression by regulating transcription elongation and plays a role in telomere length maintenance. H3K4me enrichment correlates with transcription levels, and occurs in a 5' to 3' gradient with H3K4me3 enrichment at the 5'-end of genes, shifting to H3K4me2 and then H3K4me1. Methylated by SET2 to form H3K36me. H3K36me represses gene expression. Methylated by DOT1 to form H3K79me. H3K79me is required for association of SIR proteins with telomeric regions and for telomeric silencing. The COMPASS-mediated formation of H3K4me2/3 and the DOT1-mediated formation of H3K79me require H2BK123ub1. Acetylation of histone H3 leads to transcriptional activation. H3K14ac formation by GCN5 is promoted by H3S10ph. H3K14ac can also be formed by ESA1. H3K56ac formation occurs predominantly in newly synthesized H3 molecules during G1, S and G2/M of the cell cycle and may be involved in DNA repair.

It localises to the nucleus. The protein localises to the chromosome. Functionally, core component of nucleosome. Nucleosomes wrap and compact DNA into chromatin, limiting DNA accessibility to the cellular machineries which require DNA as a template. Histones thereby play a central role in transcription regulation, DNA repair, DNA replication and chromosomal stability. DNA accessibility is regulated via a complex set of post-translational modifications of histones, also called histone code, and nucleosome remodeling. This Lodderomyces elongisporus (strain ATCC 11503 / CBS 2605 / JCM 1781 / NBRC 1676 / NRRL YB-4239) (Yeast) protein is Histone H3.1/H3.2 (HHT1).